Reading from the N-terminus, the 450-residue chain is Benzene 1,2-dioxygenase subunit alpha (450 aa).

The Rieske domain occupies Trp54 to Ala163. [2Fe-2S] cluster contacts are provided by Cys96, His98, Cys116, and His119. Residues His222 and His228 each coordinate Fe cation.

The protein belongs to the bacterial ring-hydroxylating dioxygenase alpha subunit family. In terms of assembly, this dioxygenase system consists of four proteins: the two subunits of the hydroxylase component (BnzA and BnzB), a ferredoxin (BnzC) and a ferredoxin reductase (BnzD). [2Fe-2S] cluster serves as cofactor. The cofactor is Fe cation.

The catalysed reaction is benzene + NADH + O2 + H(+) = cis-1,2-dihydrobenzene-1,2-diol + NAD(+). The enzyme catalyses toluene + NADH + O2 + H(+) = (1S,2R)-3-methylcyclohexa-3,5-diene-1,2-diol + NAD(+). The protein operates within aromatic compound metabolism; benzene degradation; catechol from benzene: step 1/2. It functions in the pathway xenobiotic degradation; toluene degradation. It participates in xenobiotic degradation; xylene degradation. Its function is as follows. Catalyzes both the oxidation of benzene and toluene. The polypeptide is Benzene 1,2-dioxygenase subunit alpha (bnzA) (Pseudomonas putida (strain ATCC 700007 / DSM 6899 / JCM 31910 / BCRC 17059 / LMG 24140 / F1)).